The primary structure comprises 1253 residues: Structural polyprotein (1253 aa).

The host transcription inhibition stretch occupies residues 37–71; the sequence is FQAQQMQQLISAVNALTMRQNAIAPARPPKPKKKK. Residues 58-109 form a disordered region; sequence AIAPARPPKPKKKKTTKPKPKTQPKKINGKTQQQKKKDKQADKKKKKPGKRE. Residues 64–105 carry the Nuclear localization signal motif; sequence PPKPKKKKTTKPKPKTQPKKINGKTQQQKKKDKQADKKKKKP. The segment covering 65–107 has biased composition (basic residues); the sequence is PKPKKKKTTKPKPKTQPKKINGKTQQQKKKDKQADKKKKKPGK. Positions 87 to 120 are binding to the viral RNA; that stretch reads KTQQQKKKDKQADKKKKKPGKRERMCMKIENDCI. Residues 105–119 form a ribosome-binding region; sequence PGKRERMCMKIENDC. An intrachain disulfide couples C119 to C134. The region spanning 119-267 is the Peptidase S3 domain; that stretch reads CIFEVKHEGK…RVTPEGSEEW (149 aa). H145 functions as the Charge relay system in the catalytic mechanism. The short motif at 150–160 is the Nuclear export signal element; it reads IDNADLAKLAF. Residues 161–166 form an interaction with spike glycoprotein E2 region; sequence KKSSKY. Catalysis depends on D167, which acts as the Charge relay system. Residues 189 to 199 are dimerization of the capsid protein; it reads PEGHYNWHHGA. The active-site Charge relay system is the S219. The dimerization of the capsid protein stretch occupies residues 225-229; it reads DNKGR. The Extracellular segment spans residues 268 to 701; it reads SAPLITAMCV…YGLYPAATVS (434 aa). Disulfide bonds link C276/C285, C290/C294, and C293/C325. A glycan (N-linked (GlcNAc...) asparagine; by host) is linked at N280. N327 is a glycosylation site (N-linked (GlcNAc...) asparagine; by host). Disulfide bonds link C352-C458, C355-C361, C424-C438, C486-C598, C534-C558, and C536-C553. N-linked (GlcNAc...) asparagine; by host glycosylation is present at N533. N595 carries an N-linked (GlcNAc...) asparagine; by host glycan. A helical membrane pass occupies residues 702 to 722; that stretch reads AVVGMSLLALISIFASCYMLV. C718 is lipidated: S-stearoyl cysteine; by host. Residues 723-727 are interaction with the capsid protein; that stretch reads AARSK. Residues 723-755 lie on the Cytoplasmic side of the membrane; sequence AARSKCLTPYALTPGAAVPWTLGILCCAPRAHA. A lipid anchor (S-stearoyl cysteine; by host) is attached at C728. Positions 728 to 748 are transient transmembrane before p62-6K protein processing; it reads CLTPYALTPGAAVPWTLGILC. C728 and C749 are disulfide-bonded. 2 S-palmitoyl cysteine; by host lipidation sites follow: C748 and C749. Residues 756–770 lie on the Extracellular side of the membrane; the sequence is ASVAETMAYLWDQNQ. The chain crosses the membrane as a helical span at residues 771 to 791; sequence ALFWLEFAAPVACILIITYCL. Position 792 (R792) is a topological domain, cytoplasmic. The chain crosses the membrane as a helical span at residues 793–813; sequence NVLCCCKSLSFLVLLSLGATA. Topologically, residues 814-1230 are extracellular; that stretch reads RAYEHSTVMP…ALSWVQKISG (417 aa). Cystine bridges form between C864-C929, C877-C909, C878-C911, and C883-C893. The interval 899-916 is E1 fusion peptide loop; that stretch reads VYPFMWGGAYCFCDSENT. N956 and N1085 each carry an N-linked (GlcNAc...) asparagine; by host glycan. Intrachain disulfides connect C1074–C1086, C1116–C1191, C1121–C1195, and C1143–C1185. Residues 1112–1192 form an E1-DIII; interaction with host receptor VLDLR region; the sequence is IDLTCTVATC…SLCSARATCS (81 aa). A helical transmembrane segment spans residues 1231-1251; it reads GLGAFAIGAILVLVVVTCIGL. Residue C1248 is the site of S-stearoyl cysteine; by host attachment. Residues 1252-1253 lie on the Cytoplasmic side of the membrane; sequence RR.

Homodimer. Homomultimer. Interacts with host karyopherin KPNA4; this interaction allows the nuclear import of the viral capsid protein. Interacts with spike glycoprotein E2. Interacts with host IRAK1; the interaction leads to inhibition of IRAK1-dependent signaling. As to quaternary structure, the precursor of protein E3/E2 and E1 form a heterodimer shortly after synthesis. In terms of assembly, the precursor of protein E3/E2 and E1 form a heterodimer shortly after synthesis. Processing of the precursor of protein E3/E2 into E2 and E3 results in a heterodimer of the spike glycoproteins E2 and E1. Spike at virion surface are constituted of a trimer of E2-E1 heterodimers. E2-E1 heterodimers interact with host VLDLR or LRP8/APOER2 to mediate viral entry. After target cell attachment and endocytosis, E1 change conformation to form homotrimers. Interacts with 6K protein. Interacts (via E1-DIII) with host VLDLR (via class A repeats); this interaction mediates viral entry into host cell. Interacts with spike glycoprotein E1. Processing of the precursor of protein E3/E2 into E2 and E3 results in a heterodimer of the spike glycoproteins E2 and E1. Spike at virion surface are constituted of a trimer of E2-E1 heterodimers. E2-E1 heterodimers interact with host VLDLR or LRP8/APOER2 to mediate viral entry. Interacts with 6K protein. As to quaternary structure, oligomer. Interacts with spike glycoprotein E1. Interacts with spike glycoprotein E2. Specific enzymatic cleavages in vivo yield mature proteins. Capsid protein is auto-cleaved during polyprotein translation, unmasking a signal peptide at the N-terminus of the precursor of E3/E2. The remaining polyprotein is then targeted to the host endoplasmic reticulum, where host signal peptidase cleaves it into pE2, 6K and E1 proteins. pE2 is further processed to mature E3 and E2 by host furin in trans-Golgi vesicle. Protein processing process takes about 30 minutes at physiologic temperatures. The folding of the p62/6K/E1 precursor requires the formation of intrachain disulfide bonds and has been shown to involve a transient covalent interaction between the nascent and newly synthesized heterodimer and the host-cell chaperones, P4HB/PDI and PDIA3/ERp57. The folding pathway also includes non covalent interaction with human CANX/calnexin and CALR/calreticulin. In terms of processing, palmitoylated via thioester bonds. These palmitoylations may induce disruption of the C-terminus transmembrane. This would result in the reorientation of E2 C-terminus from lumenal to cytoplasmic side. Post-translationally, envelope E1, E2 and E3 proteins are N-glycosylated. Stearoylated. In terms of processing, palmitoylated via thioester bonds with about four covalently bound fatty acids per molecule.

The protein resides in the virion. Its subcellular location is the host cytoplasm. It is found in the host cell membrane. The protein localises to the host nucleus. It localises to the virion membrane. The protein resides in the host Golgi apparatus. Its subcellular location is the host trans-Golgi network. It is found in the host endoplasmic reticulum. It carries out the reaction Autocatalytic release of the core protein from the N-terminus of the togavirus structural polyprotein by hydrolysis of a -Trp-|-Ser- bond.. Its function is as follows. Forms an icosahedral capsid with a T=4 symmetry composed of 240 copies of the capsid protein surrounded by a lipid membrane through which penetrate 80 spikes composed of trimers of E1-E2 heterodimers. The capsid protein binds to the viral RNA genome at a site adjacent to a ribosome binding site for viral genome translation following genome release. Possesses a protease activity that results in its autocatalytic cleavage from the nascent structural protein. Following its self-cleavage, the capsid protein transiently associates with ribosomes, and within several minutes the protein binds to viral RNA and rapidly assembles into icosahedric core particles. The resulting nucleocapsid eventually associates with the cytoplasmic domain of the spike glycoprotein E2 at the cell membrane, leading to budding and formation of mature virions. In case of infection, new virions attach to target cells and after clathrin-mediated endocytosis their membrane fuses with the host endosomal membrane. This leads to the release of the nucleocapsid into the cytoplasm, followed by an uncoating event necessary for the genomic RNA to become accessible. The uncoating might be triggered by the interaction of capsid proteins with ribosomes. Binding of ribosomes would release the genomic RNA since the same region is genomic RNA-binding and ribosome-binding. Specifically inhibits interleukin-1 receptor-associated kinase 1/IRAK1-dependent signaling during viral entry, representing a means by which the alphaviruses may evade innate immune detection and activation prior to viral gene expression. In terms of biological role, provides the signal sequence for the translocation of the precursor of protein E3/E2 to the host endoplasmic reticulum. Furin-cleaved E3 remains associated with spike glycoprotein E1 and mediates pH protection of the latter during the transport via the secretory pathway. After virion release from the host cell, the assembly protein E3 is gradually released in the extracellular space. Functionally, plays a role in viral attachment to target host cell, by binding to the cell receptors VLDLR or LRP8/APOER2. The host LDLR can act as a cell receptor for viral entry. Synthesized as a p62 precursor which is processed by furin at the cell membrane just before virion budding, giving rise to E2-E1 heterodimer. The p62-E1 heterodimer is stable, whereas E2-E1 is unstable and dissociate at low pH. p62 is processed at the last step, presumably to avoid E1 fusion activation before its final export to cell surface. E2 C-terminus contains a transitory transmembrane that would be disrupted by palmitoylation, resulting in reorientation of the C-terminal tail from lumenal to cytoplasmic side. This step is critical since E2 C-terminus is involved in budding by interacting with capsid proteins. This release of E2 C-terminus in cytoplasm occurs lately in protein export, and precludes premature assembly of particles at the endoplasmic reticulum membrane. Acts as a viroporin that participates in virus glycoprotein processing and transport to the plasma membrane, cell permeabilization and budding of viral particles. Disrupts the calcium homeostasis of the cell, probably at the endoplasmic reticulum level. This leads to cytoplasmic calcium elevation. Because of its lipophilic properties, the 6K protein is postulated to influence the selection of lipids that interact with the transmembrane domains of the glycoproteins, which, in turn, affects the deformability of the bilayer required for the extreme curvature that occurs as budding proceeds. Present in low amount in virions, about 3% compared to viral glycoproteins. Its function is as follows. Class II viral fusion protein. Fusion activity is inactive as long as E1 is bound to E2 in mature virion. After virus attachment to target cell via host VLDLR or LRP8/APOER2 and endocytosis, acidification of the endosome induces dissociation of E1/E2 heterodimer and concomitant trimerization of the E1 subunits. This E1 trimer is fusion active, and promotes release of viral nucleocapsid in cytoplasm after endosome and viral membrane fusion. Efficient fusion requires the presence of cholesterol and sphingolipid in the target membrane. Fusion is optimal at levels of about 1 molecule of cholesterol per 2 molecules of phospholipids, and is specific for sterols containing a 3-beta-hydroxyl group. This is Structural polyprotein from Aedes (Middle-African hedgehog).